A 387-amino-acid polypeptide reads, in one-letter code: Alpha-sarcoglycan (387 aa).

A signal peptide spans 1–24; it reads MAAAALLWLPLLVGCLAGPGGTEA. Residues 25–290 lie on the Extracellular side of the membrane; the sequence is QQTTLYPLVG…ATARDFLADA (266 aa). N-linked (GlcNAc...) asparagine glycosylation is found at asparagine 174 and asparagine 246. Residues 291–311 form a helical membrane-spanning segment; it reads LVTLLVPLLVALLLALLLAYI. At 312-387 the chain is on the cytoplasmic side; sequence MCCRREGRLK…AQVPLILDQH (76 aa). Serine 377 is modified (phosphoserine).

It belongs to the sarcoglycan alpha/epsilon family. In terms of assembly, cross-link to form 2 major subcomplexes: one consisting of SGCB, SGCD and SGCG and the other consisting of SGCB and SGCD. The association between SGCB and SGCG is particularly strong while SGCA is loosely associated with the other sarcoglycans. Interacts with the syntrophin SNTA1.

Its subcellular location is the cell membrane. It localises to the sarcolemma. It is found in the cytoplasm. The protein localises to the cytoskeleton. Its function is as follows. Component of the sarcoglycan complex, a subcomplex of the dystrophin-glycoprotein complex which forms a link between the F-actin cytoskeleton and the extracellular matrix. This chain is Alpha-sarcoglycan (SGCA), found in Oryctolagus cuniculus (Rabbit).